A 206-amino-acid polypeptide reads, in one-letter code: NADH-quinone oxidoreductase subunit C (206 aa).

It belongs to the complex I 30 kDa subunit family. In terms of assembly, NDH-1 is composed of 14 different subunits. Subunits NuoB, C, D, E, F, and G constitute the peripheral sector of the complex.

The protein localises to the cell inner membrane. It catalyses the reaction a quinone + NADH + 5 H(+)(in) = a quinol + NAD(+) + 4 H(+)(out). In terms of biological role, NDH-1 shuttles electrons from NADH, via FMN and iron-sulfur (Fe-S) centers, to quinones in the respiratory chain. The immediate electron acceptor for the enzyme in this species is believed to be ubiquinone. Couples the redox reaction to proton translocation (for every two electrons transferred, four hydrogen ions are translocated across the cytoplasmic membrane), and thus conserves the redox energy in a proton gradient. This Bordetella avium (strain 197N) protein is NADH-quinone oxidoreductase subunit C.